A 208-amino-acid polypeptide reads, in one-letter code: Flavin-dependent thymidylate synthase (208 aa).

The 208-residue stretch at 1–208 folds into the ThyX domain; sequence MEVICKHYTP…QYLFEDCLKH (208 aa). FAD is bound by residues Ser50 and 74–76; that span reads RHR. DUMP is bound by residues 71-74, 84-86, and Lys147; these read ELSR and SSR. A ThyX motif motif is present at residues 74–84; sequence RHRIASLSVKS. FAD contacts are provided by residues 163–165 and Asn169; that span reads NAR. Residue Arg174 coordinates dUMP. The Involved in ionization of N3 of dUMP, leading to its activation role is filled by Arg174.

Belongs to the thymidylate synthase ThyX family. In terms of assembly, homotetramer. The cofactor is FAD.

It carries out the reaction dUMP + (6R)-5,10-methylene-5,6,7,8-tetrahydrofolate + NADPH + H(+) = dTMP + (6S)-5,6,7,8-tetrahydrofolate + NADP(+). Its pathway is pyrimidine metabolism; dTTP biosynthesis. Functionally, catalyzes the reductive methylation of 2'-deoxyuridine-5'-monophosphate (dUMP) to 2'-deoxythymidine-5'-monophosphate (dTMP) while utilizing 5,10-methylenetetrahydrofolate (mTHF) as the methyl donor, and NAD(P)H and FADH(2) as the reductant. This is Flavin-dependent thymidylate synthase from Helicobacter pylori (strain ATCC 700392 / 26695) (Campylobacter pylori).